We begin with the raw amino-acid sequence, 803 residues long: Isoamylase 1, chloroplastic (803 aa).

The transit peptide at 1-54 (MASLPHCLSARPLVVAAAPGRPGPGPGPWLRGGARRRNAAFSAGNAGRRVGLRR) directs the protein to the chloroplast. The active-site Nucleophile is the Asp432. Catalysis depends on Glu488, which acts as the Proton donor.

It belongs to the glycosyl hydrolase 13 family. As to quaternary structure, forms a homo-pentamer and a hetero-hexamer composed of five ISA1 and one ISA2. Interacts with FLO6/SIP4. Highly expressed in developing endosperm. Expressed at low levels in leaves.

The protein localises to the plastid. The protein resides in the chloroplast. It carries out the reaction Hydrolysis of (1-&gt;6)-alpha-D-glucosidic branch linkages in glycogen, amylopectin and their beta-limit dextrins.. It participates in glycan biosynthesis; starch biosynthesis. With respect to regulation, inhibited by copper chloride, mercury chloride, ammonium molybdate and para-chloromercuribenzoate. Its function is as follows. Starch-debranching enzyme involved in amylopectin biosynthesis in endosperm. Functions by removing excess branches or improper branches that interfere with the formation of double helices of the cluster chains of amylopectin and crystallization of starch. Works as ISA1 homooligomer or together with ISA2 as heterooligomer. The heterooligomer ISA1 and ISA2 possesses higher affinity than the ISA1 homooligomer for various branched polyglucans in vitro, but no marked differences exist in chain preferences for debranching of amylopectin and phytoglycogen between these forms. The chain is Isoamylase 1, chloroplastic from Oryza sativa subsp. japonica (Rice).